The primary structure comprises 572 residues: Hexokinase (572 aa).

The Hexokinase domain occupies 49–492 (DEPPISLETV…SGKGAALITA (444 aa)). The segment at 105–237 (NGTEEGRFIA…DIKVEVVALI (133 aa)) is hexokinase small subdomain. D-glucose 6-phosphate is bound by residues 116–120 (DLGGT) and Ser185. 116 to 121 (DLGGTN) contacts ATP. Substrate-binding positions include 185 to 186 (SY), 202 to 203 (TK), and 238 to 239 (ND). A hexokinase large subdomain region spans residues 238-481 (NDTVGTMVAA…LKFKLLQTAD (244 aa)). Residues Asp239 and Thr263 each contribute to the D-glucose 6-phosphate site. Residue Thr263 coordinates ATP. Substrate contacts are provided by Asn266, Glu297, and Asp331. ATP is bound by residues 336–337 (GK), 373–377 (TKYIS), and 448–452 (STYKY). D-glucose 6-phosphate is bound by residues 446 to 448 (DGS) and Ser483.

It belongs to the hexokinase family.

It carries out the reaction a D-hexose + ATP = a D-hexose 6-phosphate + ADP + H(+). The enzyme catalyses D-mannose + ATP = D-mannose 6-phosphate + ADP + H(+). It catalyses the reaction D-fructose + ATP = D-fructose 6-phosphate + ADP + H(+). The catalysed reaction is D-glucose + ATP = D-glucose 6-phosphate + ADP + H(+). It participates in carbohydrate metabolism; hexose metabolism. The protein operates within carbohydrate degradation; glycolysis; D-glyceraldehyde 3-phosphate and glycerone phosphate from D-glucose: step 1/4. With respect to regulation, activated by glucose-6-phosphate. Inhibited by N-acetylglucosamine, glucosamine, mannoheptulose and ADP. In terms of biological role, active against glucose, fructose, mannose, maltose and galactose. The protein is Hexokinase of Brugia malayi (Filarial nematode worm).